We begin with the raw amino-acid sequence, 582 residues long: Eukaryotic translation initiation factor 2A (582 aa).

4 WD repeats span residues 21–63, 73–124, 273–314, and 358–402; these read GPPK…NIVN, LDLP…NVKS, PKNG…IFDF, and TASD…LHKY. The tract at residues 436–533 is disordered; it reads DLPTQESKPA…NTGDPETDKK (98 aa). Residues 482–580 adopt a coiled-coil conformation; sequence SKTALKNQKK…LLKELEDLEI (99 aa). Basic and acidic residues predominate over residues 495–506; that stretch reads KKAAKQESKMDE. A compositionally biased stretch (polar residues) spans 510-522; it reads SDSTNVQNNTPVA.

Belongs to the WD repeat EIF2A family.

Functions in the early steps of protein synthesis of a small number of specific mRNAs. Acts by directing the binding of methionyl-tRNAi to 40S ribosomal subunits. In contrast to the eIF-2 complex, it binds methionyl-tRNAi to 40S subunits in a codon-dependent manner, whereas the eIF-2 complex binds methionyl-tRNAi to 40S subunits in a GTP-dependent manner. The sequence is that of Eukaryotic translation initiation factor 2A (eif2a) from Xenopus laevis (African clawed frog).